We begin with the raw amino-acid sequence, 344 residues long: Uroporphyrinogen decarboxylase (344 aa).

Residues 26–30 (RQAGR), F45, D75, Y151, S206, and H320 contribute to the substrate site.

Belongs to the uroporphyrinogen decarboxylase family. In terms of assembly, homodimer.

It is found in the cytoplasm. It catalyses the reaction uroporphyrinogen III + 4 H(+) = coproporphyrinogen III + 4 CO2. Its pathway is porphyrin-containing compound metabolism; protoporphyrin-IX biosynthesis; coproporphyrinogen-III from 5-aminolevulinate: step 4/4. Functionally, catalyzes the decarboxylation of four acetate groups of uroporphyrinogen-III to yield coproporphyrinogen-III. This chain is Uroporphyrinogen decarboxylase, found in Staphylococcus haemolyticus (strain JCSC1435).